A 69-amino-acid chain; its full sequence is MCCFDTLHIFYNIRSINPTLLNFINYFLLIVPQFIKSYRFIVSGNANCHGTWRDYCAQYTQRVGRPNFE.

The chain crosses the membrane as a helical span at residues 13 to 35; sequence IRSINPTLLNFINYFLLIVPQFI.

It is found in the membrane. This is an uncharacterized protein from Saccharomyces cerevisiae (strain ATCC 204508 / S288c) (Baker's yeast).